The sequence spans 264 residues: Phosphoribosylaminoimidazole-succinocarboxamide synthase 1 (264 aa).

The protein belongs to the SAICAR synthetase family.

The catalysed reaction is 5-amino-1-(5-phospho-D-ribosyl)imidazole-4-carboxylate + L-aspartate + ATP = (2S)-2-[5-amino-1-(5-phospho-beta-D-ribosyl)imidazole-4-carboxamido]succinate + ADP + phosphate + 2 H(+). It participates in purine metabolism; IMP biosynthesis via de novo pathway; 5-amino-1-(5-phospho-D-ribosyl)imidazole-4-carboxamide from 5-amino-1-(5-phospho-D-ribosyl)imidazole-4-carboxylate: step 1/2. The sequence is that of Phosphoribosylaminoimidazole-succinocarboxamide synthase 1 (purC1) from Mesorhizobium japonicum (strain LMG 29417 / CECT 9101 / MAFF 303099) (Mesorhizobium loti (strain MAFF 303099)).